Here is a 218-residue protein sequence, read N- to C-terminus: Phosphatidylserine decarboxylase proenzyme (218 aa).

Ser-187 serves as the catalytic Schiff-base intermediate with substrate; via pyruvic acid. A Pyruvic acid (Ser); by autocatalysis modification is found at Ser-187.

Belongs to the phosphatidylserine decarboxylase family. PSD-A subfamily. In terms of assembly, heterodimer of a large membrane-associated beta subunit and a small pyruvoyl-containing alpha subunit. Pyruvate serves as cofactor. Post-translationally, is synthesized initially as an inactive proenzyme. Formation of the active enzyme involves a self-maturation process in which the active site pyruvoyl group is generated from an internal serine residue via an autocatalytic post-translational modification. Two non-identical subunits are generated from the proenzyme in this reaction, and the pyruvate is formed at the N-terminus of the alpha chain, which is derived from the carboxyl end of the proenzyme. The post-translation cleavage follows an unusual pathway, termed non-hydrolytic serinolysis, in which the side chain hydroxyl group of the serine supplies its oxygen atom to form the C-terminus of the beta chain, while the remainder of the serine residue undergoes an oxidative deamination to produce ammonia and the pyruvoyl prosthetic group on the alpha chain.

Its subcellular location is the cell membrane. The catalysed reaction is a 1,2-diacyl-sn-glycero-3-phospho-L-serine + H(+) = a 1,2-diacyl-sn-glycero-3-phosphoethanolamine + CO2. It functions in the pathway phospholipid metabolism; phosphatidylethanolamine biosynthesis; phosphatidylethanolamine from CDP-diacylglycerol: step 2/2. Functionally, catalyzes the formation of phosphatidylethanolamine (PtdEtn) from phosphatidylserine (PtdSer). The sequence is that of Phosphatidylserine decarboxylase proenzyme from Geobacter metallireducens (strain ATCC 53774 / DSM 7210 / GS-15).